The chain runs to 80 residues: D-alanyl carrier protein 1 (80 aa).

Residues 1–80 (MTMDDTKATV…KIVAKVENLQ (80 aa)) enclose the Carrier domain. S38 carries the post-translational modification O-(pantetheine 4'-phosphoryl)serine.

Belongs to the DltC family. Post-translationally, 4'-phosphopantetheine is transferred from CoA to a specific serine of apo-DCP.

Its subcellular location is the cytoplasm. It participates in cell wall biogenesis; lipoteichoic acid biosynthesis. Its function is as follows. Carrier protein involved in the D-alanylation of lipoteichoic acid (LTA). The loading of thioester-linked D-alanine onto DltC is catalyzed by D-alanine--D-alanyl carrier protein ligase DltA. The DltC-carried D-alanyl group is further transferred to cell membrane phosphatidylglycerol (PG) by forming an ester bond, probably catalyzed by DltD. D-alanylation of LTA plays an important role in modulating the properties of the cell wall in Gram-positive bacteria, influencing the net charge of the cell wall. This is D-alanyl carrier protein 1 from Lactiplantibacillus plantarum (strain ATCC BAA-793 / NCIMB 8826 / WCFS1) (Lactobacillus plantarum).